The sequence spans 329 residues: GTPase Obg (329 aa).

Residues 1 to 159 form the Obg domain; sequence MQFIDQARIT…WPLQLELKLL (159 aa). The region spanning 160–328 is the OBG-type G domain; that stretch reads AEVGIIGLPN…LLAETWVELG (169 aa). Residues 166 to 173, 191 to 195, 213 to 216, 280 to 283, and 309 to 311 each bind ATP; these read GLPNAGKS, FTTLV, DIPG, NKQE, and SAA. 2 residues coordinate Mg(2+): serine 173 and threonine 193.

Belongs to the TRAFAC class OBG-HflX-like GTPase superfamily. OBG GTPase family. Monomer. Mg(2+) is required as a cofactor.

It localises to the cytoplasm. Its function is as follows. An essential GTPase which binds GTP, GDP and possibly (p)ppGpp with moderate affinity, with high nucleotide exchange rates and a fairly low GTP hydrolysis rate. Plays a role in control of the cell cycle, stress response, ribosome biogenesis and in those bacteria that undergo differentiation, in morphogenesis control. This chain is GTPase Obg, found in Synechococcus sp. (strain CC9605).